The primary structure comprises 160 residues: MIP18 family protein F45G2.10 (160 aa).

Positions 1–32 are disordered; sequence MGQERLDNANPTLFDSKPRHRPVTGTERDESV.

The protein belongs to the MIP18 family.

In terms of biological role, may play a role in chromosome segregation through establishment of sister chromatid cohesion. This chain is MIP18 family protein F45G2.10, found in Caenorhabditis elegans.